The primary structure comprises 186 residues: Threonylcarbamoyl-AMP synthase (186 aa).

A YrdC-like domain is found at 6 to 186; that stretch reads GFRLRLAANA…FDAMSGRRIR (181 aa).

It belongs to the SUA5 family. TsaC subfamily.

The protein resides in the cytoplasm. It catalyses the reaction L-threonine + hydrogencarbonate + ATP = L-threonylcarbamoyladenylate + diphosphate + H2O. Functionally, required for the formation of a threonylcarbamoyl group on adenosine at position 37 (t(6)A37) in tRNAs that read codons beginning with adenine. Catalyzes the conversion of L-threonine, HCO(3)(-)/CO(2) and ATP to give threonylcarbamoyl-AMP (TC-AMP) as the acyladenylate intermediate, with the release of diphosphate. The protein is Threonylcarbamoyl-AMP synthase of Methylococcus capsulatus (strain ATCC 33009 / NCIMB 11132 / Bath).